A 778-amino-acid polypeptide reads, in one-letter code: Semaphorin-3ab (778 aa).

An N-terminal signal peptide occupies residues 1–17; that stretch reads MDYLWWIVLLIWTLIAP. A Sema domain is found at 32–515; sequence RLKPSYKEML…SAIGVSQMPL (484 aa). Asparagine 54 is a glycosylation site (N-linked (GlcNAc...) asparagine). Cysteine 105 and cysteine 116 form a disulfide bridge. N-linked (GlcNAc...) asparagine glycosylation occurs at asparagine 127. 4 disulfides stabilise this stretch: cysteine 134–cysteine 143, cysteine 270–cysteine 382, cysteine 294–cysteine 342, and cysteine 518–cysteine 536. One can recognise an Ig-like C2-type domain in the interval 579 to 668; sequence GEAGLLDKTV…FIQTLLRLTL (90 aa). Asparagine 593 carries N-linked (GlcNAc...) asparagine glycosylation. Cysteine 652 and cysteine 716 form a disulfide bridge. Residues 727–778 are disordered; it reads RRQKANLLHASQSHTSQILHSSQSHAKWKLLQENKKGRNRRTHEMQRAPRSV. The segment covering 735-751 has biased composition (polar residues); it reads HASQSHTSQILHSSQSH. Residues 756–778 are compositionally biased toward basic and acidic residues; it reads LLQENKKGRNRRTHEMQRAPRSV.

It belongs to the semaphorin family. Expressed in rhombomeres three and five, and in the posterior half of newly formed somites which is avoided by ventrally extending motor axons.

It is found in the secreted. Its function is as follows. Might normally influence the midsegmental pathway choice of the ventrally extending motor axons by contributing to a repulsive domain in the posterior somite. The sequence is that of Semaphorin-3ab (sema3ab) from Danio rerio (Zebrafish).